Here is a 328-residue protein sequence, read N- to C-terminus: Putative lipase LIH1 (328 aa).

Residue Ser181 is the Nucleophile of the active site. Active-site charge relay system residues include Asp253 and His315.

It belongs to the AB hydrolase superfamily. Lipase family.

It carries out the reaction a triacylglycerol + H2O = a diacylglycerol + a fatty acid + H(+). In terms of biological role, lipases catalyze the hydrolysis of the ester bond of tri-, di- and monoglycerides of long-chain fatty acids into fatty acids and glycerol. This is Putative lipase LIH1 from Saccharomyces cerevisiae (strain ATCC 204508 / S288c) (Baker's yeast).